Here is a 577-residue protein sequence, read N- to C-terminus: Arginine--tRNA ligase (577 aa).

A 'HIGH' region motif is present at residues 122–132; it reads PNVAKEMHVGH.

Belongs to the class-I aminoacyl-tRNA synthetase family. As to quaternary structure, monomer.

It localises to the cytoplasm. It catalyses the reaction tRNA(Arg) + L-arginine + ATP = L-arginyl-tRNA(Arg) + AMP + diphosphate. In Shigella flexneri serotype 5b (strain 8401), this protein is Arginine--tRNA ligase.